Reading from the N-terminus, the 312-residue chain is Glyoxylate/hydroxypyruvate reductase A (312 aa).

Arg227 is a catalytic residue. The Proton donor role is filled by His275.

The protein belongs to the D-isomer specific 2-hydroxyacid dehydrogenase family. GhrA subfamily.

It is found in the cytoplasm. The enzyme catalyses glycolate + NADP(+) = glyoxylate + NADPH + H(+). The catalysed reaction is (R)-glycerate + NAD(+) = 3-hydroxypyruvate + NADH + H(+). It carries out the reaction (R)-glycerate + NADP(+) = 3-hydroxypyruvate + NADPH + H(+). Catalyzes the NADPH-dependent reduction of glyoxylate and hydroxypyruvate into glycolate and glycerate, respectively. This is Glyoxylate/hydroxypyruvate reductase A from Enterobacter sp. (strain 638).